The following is a 255-amino-acid chain: Large ribosomal subunit protein uL4 (255 aa).

Belongs to the universal ribosomal protein uL4 family. As to quaternary structure, part of the 50S ribosomal subunit.

Functionally, one of the primary rRNA binding proteins, this protein initially binds near the 5'-end of the 23S rRNA. It is important during the early stages of 50S assembly. It makes multiple contacts with different domains of the 23S rRNA in the assembled 50S subunit and ribosome. In terms of biological role, forms part of the polypeptide exit tunnel. The sequence is that of Large ribosomal subunit protein uL4 from Pyrococcus furiosus (strain ATCC 43587 / DSM 3638 / JCM 8422 / Vc1).